The chain runs to 335 residues: Nonaprenyl diphosphate synthase (335 aa).

3 residues coordinate isopentenyl diphosphate: Lys-57, Arg-60, and His-90. Mg(2+) contacts are provided by Asp-97 and Asp-101. Positions 97–101 match the DDXXD motif motif; that stretch reads DDVMD. Position 107 (Arg-107) interacts with isopentenyl diphosphate. The short motif at 223-227 is the DDXXD motif element; that stretch reads DDIID.

It belongs to the FPP/GGPP synthase family. The cofactor is Mg(2+).

The enzyme catalyses isopentenyl diphosphate + (2E)-geranyl diphosphate = (2E,6E)-farnesyl diphosphate + diphosphate. The catalysed reaction is isopentenyl diphosphate + (2E,6E)-farnesyl diphosphate = (2E,6E,10E)-geranylgeranyl diphosphate + diphosphate. It catalyses the reaction 5 isopentenyl diphosphate + (2E,6E,10E)-geranylgeranyl diphosphate = all-trans-nonaprenyl diphosphate + 5 diphosphate. The protein operates within isoprenoid biosynthesis; farnesyl diphosphate biosynthesis; farnesyl diphosphate from geranyl diphosphate and isopentenyl diphosphate. It functions in the pathway isoprenoid biosynthesis; geranylgeranyl diphosphate biosynthesis; geranylgeranyl diphosphate from farnesyl diphosphate and isopentenyl diphosphate: step 1/1. In terms of biological role, catalyzes the sequential condensations of isopentenyl pyrophosphate (IPP) with geranyl diphosphate (GPP) to yield (2E,6E)-farnesyl diphosphate (E,E-FPP), with E,E-FPP to yield geranylgeranyl diphosphate (GGPP) and with GGPP to yield nonaprenyl diphosphate. May also have weak activity with dimethylallyl diphosphate (DMAPP). The polypeptide is Nonaprenyl diphosphate synthase (Mycobacterium tuberculosis (strain ATCC 25618 / H37Rv)).